Reading from the N-terminus, the 555-residue chain is MARVEL domain-containing protein 2 (555 aa).

The segment covering 1–20 (MSSSDARSRIRDRGYSEVPR) has biased composition (basic and acidic residues). The disordered stretch occupies residues 1–71 (MSSSDARSRI…FYSSDTEEPA (71 aa)). Topologically, residues 1-191 (MSSSDARSRI…YMKSWAGLLR (191 aa)) are cytoplasmic. Over residues 46–59 (PLPPPPLPLQPPFG) the composition is skewed to pro residues. Phosphoserine is present on residues S117, S121, and S158. The interval 118 to 142 (PPASPARANHHPYKDPSRGSQGTFN) is disordered. T163 carries the post-translational modification Phosphothreonine. Positions 185–364 (SWAGLLRILG…SALVCLKLWR (180 aa)) constitute an MARVEL domain. The chain crosses the membrane as a helical span at residues 192–212 (ILGVVELLLGAGVFACVTAYI). The Extracellular segment spans residues 213–251 (HKDNEWYNLFGYTQPYGMGGLGSLGNTYGGYYYSGPKTP). A helical membrane pass occupies residues 252–272 (FVLVVAGLAWITTIIILVLGM). Topologically, residues 273-288 (SMYYRTILLDSNWWPL) are cytoplasmic. Residues 289–309 (TEFGVNVALFILYMAAAIVYV) traverse the membrane as a helical segment. Over 310-338 (NDTNRGGLCYYPLFNTPMNAMFCRVEGGQ) the chain is Extracellular. The helical transmembrane segment at 339–359 (IAAMIFLFVTMIVYLVSALVC) threads the bilayer. Topologically, residues 360–555 (LKLWRHEAAR…VMNWDTQGYP (196 aa)) are cytoplasmic. S384 carries the post-translational modification Phosphoserine. A Glycyl lysine isopeptide (Lys-Gly) (interchain with G-Cter in ubiquitin) cross-link involves residue K408. Residues 437 to 548 (PDYVAKYPVI…RIQEYDKVMN (112 aa)) form the OCEL domain. Positions 521–545 (EKKERCDYLKNKLSHIKQRIQEYDK) form a coiled coil.

This sequence belongs to the ELL/occludin family. Interacts with TJP1. Interacts with the ubiquitin ligase ITCH. Interacts (via C-terminal cytoplasmic domain) with LSR (via the cytoplasmic domain), ILDR1 and ILDR2; the interaction is required to recruit MARVELD2 to tricellular contacts. Post-translationally, ubiquitinated by ITCH; but this ubiquitination does not lead to proteasomal degradation. Polyubiquitinated at Lys-408 via 'Lys-63'-linked ubiquitin chains; deubiquitinated by USP53. Phosphorylated. Detected in small intestine, stomach and kidney, in epithelial cells. Detected in pancreas, retina and lung, and in stria vascularis, utricle and the organ of Conti in the inner ear (at protein level). Predominantly detected in small intestine, lung and kidney, with lower levels in liver, testis and brain. In colon, expressed in the entire crypts.

The protein localises to the cell membrane. It is found in the cell junction. It localises to the tight junction. In terms of biological role, plays a role in the formation of tricellular tight junctions and of epithelial barriers. Required for normal hearing via its role in the separation of the endolymphatic and perilymphatic spaces of the organ of Corti in the inner ear, and for normal survival of hair cells in the organ of Corti. In Mus musculus (Mouse), this protein is MARVEL domain-containing protein 2.